The chain runs to 251 residues: Alanyl-tRNA editing protein AlaX-M (251 aa).

Residues histidine 107, histidine 111, cysteine 210, and histidine 214 each contribute to the Zn(2+) site.

Belongs to the class-II aminoacyl-tRNA synthetase family. Editing domain AlaX-M subfamily. The cofactor is Zn(2+).

Its subcellular location is the cytoplasm. Functions in trans to edit the amino acid moiety from mischarged Ser-tRNA(Ala). Recognition depends, at least in part, on the acceptor stem of tRNA(Ala). This Methanosarcina mazei (strain ATCC BAA-159 / DSM 3647 / Goe1 / Go1 / JCM 11833 / OCM 88) (Methanosarcina frisia) protein is Alanyl-tRNA editing protein AlaX-M (alaXM).